Here is a 368-residue protein sequence, read N- to C-terminus: Putative J domain-containing protein R445 (368 aa).

The J domain occupies 13–83 (DLYKILGLTN…KQRNEYNQRL (71 aa)).

The polypeptide is Putative J domain-containing protein R445 (Acanthamoeba polyphaga mimivirus (APMV)).